We begin with the raw amino-acid sequence, 320 residues long: Protein phosphatase PTC7 homolog fig (320 aa).

The region spanning Pro-49–Val-315 is the PPM-type phosphatase domain. Mn(2+) contacts are provided by Asp-93, Gly-94, and Asp-238.

This sequence belongs to the PP2C family. Mg(2+) serves as cofactor. Requires Mn(2+) as cofactor.

The catalysed reaction is O-phospho-L-seryl-[protein] + H2O = L-seryl-[protein] + phosphate. It carries out the reaction O-phospho-L-threonyl-[protein] + H2O = L-threonyl-[protein] + phosphate. The polypeptide is Protein phosphatase PTC7 homolog fig (Drosophila yakuba (Fruit fly)).